Reading from the N-terminus, the 179-residue chain is Large ribosomal subunit protein uL5 (179 aa).

The protein belongs to the universal ribosomal protein uL5 family. Part of the 50S ribosomal subunit; part of the 5S rRNA/L5/L18/L25 subcomplex. Contacts the 5S rRNA and the P site tRNA. Forms a bridge to the 30S subunit in the 70S ribosome.

Its function is as follows. This is one of the proteins that bind and probably mediate the attachment of the 5S RNA into the large ribosomal subunit, where it forms part of the central protuberance. In the 70S ribosome it contacts protein S13 of the 30S subunit (bridge B1b), connecting the 2 subunits; this bridge is implicated in subunit movement. Contacts the P site tRNA; the 5S rRNA and some of its associated proteins might help stabilize positioning of ribosome-bound tRNAs. The protein is Large ribosomal subunit protein uL5 of Bacillus cereus (strain G9842).